The chain runs to 2544 residues: Highly reducing polyketide synthase pkhB (2544 aa).

The Ketosynthase family 3 (KS3) domain maps to Ser9–Ser438. Active-site for beta-ketoacyl synthase activity residues include Cys182, His317, and His358. A malonyl-CoA:ACP transacylase (MAT) domain region spans residues Val566–Glu876. The tract at residues His948–Val1082 is N-terminal hotdog fold. Residues His948 to Ser1252 form a dehydratase (DH) domain region. One can recognise a PKS/mFAS DH domain in the interval His948–Ala1254. His980 functions as the Proton acceptor; for dehydratase activity in the catalytic mechanism. The tract at residues Tyr1095 to Ala1254 is C-terminal hotdog fold. The Proton donor; for dehydratase activity role is filled by Asp1165. The interval Ser1398–Asp1573 is methyltransferase (CMet) domain. The interval Gly1826–Leu2142 is enoyl reductase (ER) domain. Positions Ala2169–Ser2356 are ketoreductase (KR) domain. A Carrier domain is found at Glu2462–Ser2539. The residue at position 2499 (Ser2499) is an O-(pantetheine 4'-phosphoryl)serine.

Pantetheine 4'-phosphate is required as a cofactor.

The protein operates within secondary metabolite biosynthesis. In terms of biological role, highly reducing polyketide synthase; part of the pkh gene cluster that mediates the biosynthesis of 2,4-dihydroxy-6-[(3E,5E,7E)-2-oxonona-3,5,7-trienyl]benzaldehyde. The highly reducing polyketide synthase pkhB first produces the (2E,4E,6E)-octa-2,4,6-trienyl strater unit for the non-reducing polyketide synthase pkhA. This octatrienoyl starter is then loaded onto the SAT domain of the NR-PKS pkhA to be condensed with 4 malonyl-CoA units to yield 2,4-dihydroxy-6-[(3E,5E,7E)-2-oxonona-3,5,7-trienyl]benzaldehyde. The protein is Highly reducing polyketide synthase pkhB of Emericella nidulans (strain FGSC A4 / ATCC 38163 / CBS 112.46 / NRRL 194 / M139) (Aspergillus nidulans).